We begin with the raw amino-acid sequence, 228 residues long: uncharacterized protein (228 aa).

The region spanning 11–78 (PPVNQQIYRI…PQRGSYVNKI (68 aa)) is the HTH gntR-type domain. The segment at residues 38–57 (EKEVSVRFNVSRQPVREAFI) is a DNA-binding region (H-T-H motif).

This is an uncharacterized protein from Escherichia coli O6:H1 (strain CFT073 / ATCC 700928 / UPEC).